A 185-amino-acid polypeptide reads, in one-letter code: Ribosome-recycling factor (185 aa).

Belongs to the RRF family.

Its subcellular location is the cytoplasm. In terms of biological role, responsible for the release of ribosomes from messenger RNA at the termination of protein biosynthesis. May increase the efficiency of translation by recycling ribosomes from one round of translation to another. This chain is Ribosome-recycling factor, found in Heliobacterium modesticaldum (strain ATCC 51547 / Ice1).